The primary structure comprises 421 residues: D-amino acid dehydrogenase (421 aa).

4-18 lines the FAD pocket; sequence VLVLGSGVVGLTSAW.

The protein belongs to the DadA oxidoreductase family. Requires FAD as cofactor.

It carries out the reaction a D-alpha-amino acid + A + H2O = a 2-oxocarboxylate + AH2 + NH4(+). It functions in the pathway amino-acid degradation; D-alanine degradation; NH(3) and pyruvate from D-alanine: step 1/1. Functionally, oxidative deamination of D-amino acids. This chain is D-amino acid dehydrogenase, found in Vibrio cholerae serotype O1 (strain ATCC 39541 / Classical Ogawa 395 / O395).